Consider the following 226-residue polypeptide: Transcriptional regulatory protein DpiA (226 aa).

Residues Thr-6–Arg-122 enclose the Response regulatory domain. Residue Asp-57 is modified to 4-aspartylphosphate. Positions Ala-180–Glu-199 form a DNA-binding region, H-T-H motif.

In terms of processing, phosphorylated and activated by DpiB.

It is found in the cytoplasm. Functionally, member of the two-component regulatory system DpiA/DpiB, which is essential for expression of citrate-specific fermentation genes and genes involved in plasmid inheritance. Could be involved in response to both the presence of citrate and external redox conditions. This is Transcriptional regulatory protein DpiA (dpiA) from Escherichia coli O157:H7.